A 227-amino-acid polypeptide reads, in one-letter code: PKHD-type hydroxylase ACIAD0531 (227 aa).

The 101-residue stretch at 78–178 (HIIPPLFNRY…RFASFFWVQS (101 aa)) folds into the Fe2OG dioxygenase domain. Residues His96, Asp98, and His159 each contribute to the Fe cation site. Arg169 is a binding site for 2-oxoglutarate.

Fe(2+) serves as cofactor. L-ascorbate is required as a cofactor.

The polypeptide is PKHD-type hydroxylase ACIAD0531 (Acinetobacter baylyi (strain ATCC 33305 / BD413 / ADP1)).